Reading from the N-terminus, the 457-residue chain is Bifunctional protein GlmU (457 aa).

The pyrophosphorylase stretch occupies residues 1-230 (MLNVVILAAG…SWETLGVNSR (230 aa)). UDP-N-acetyl-alpha-D-glucosamine contacts are provided by residues 7–10 (LAAG), Lys21, Gln73, 78–79 (GT), 104–106 (YGD), Gly140, Glu155, Asn170, and Asn228. Asp106 contacts Mg(2+). Asn228 provides a ligand contact to Mg(2+). Residues 231–251 (VQQAQLERAWQSELARRQLEA) are linker. Residues 252–457 (GVTLADPARF…EGWKRPVKKS (206 aa)) form an N-acetyltransferase region. Arg334 and Lys352 together coordinate UDP-N-acetyl-alpha-D-glucosamine. His364 (proton acceptor) is an active-site residue. UDP-N-acetyl-alpha-D-glucosamine-binding residues include Tyr367 and Asn378. Residues Ala381, 387 to 388 (NY), Ser406, Ala424, and Arg441 contribute to the acetyl-CoA site.

It in the N-terminal section; belongs to the N-acetylglucosamine-1-phosphate uridyltransferase family. The protein in the C-terminal section; belongs to the transferase hexapeptide repeat family. As to quaternary structure, homotrimer. Requires Mg(2+) as cofactor.

Its subcellular location is the cytoplasm. It catalyses the reaction alpha-D-glucosamine 1-phosphate + acetyl-CoA = N-acetyl-alpha-D-glucosamine 1-phosphate + CoA + H(+). The enzyme catalyses N-acetyl-alpha-D-glucosamine 1-phosphate + UTP + H(+) = UDP-N-acetyl-alpha-D-glucosamine + diphosphate. The protein operates within nucleotide-sugar biosynthesis; UDP-N-acetyl-alpha-D-glucosamine biosynthesis; N-acetyl-alpha-D-glucosamine 1-phosphate from alpha-D-glucosamine 6-phosphate (route II): step 2/2. It functions in the pathway nucleotide-sugar biosynthesis; UDP-N-acetyl-alpha-D-glucosamine biosynthesis; UDP-N-acetyl-alpha-D-glucosamine from N-acetyl-alpha-D-glucosamine 1-phosphate: step 1/1. Its pathway is bacterial outer membrane biogenesis; LPS lipid A biosynthesis. Its function is as follows. Catalyzes the last two sequential reactions in the de novo biosynthetic pathway for UDP-N-acetylglucosamine (UDP-GlcNAc). The C-terminal domain catalyzes the transfer of acetyl group from acetyl coenzyme A to glucosamine-1-phosphate (GlcN-1-P) to produce N-acetylglucosamine-1-phosphate (GlcNAc-1-P), which is converted into UDP-GlcNAc by the transfer of uridine 5-monophosphate (from uridine 5-triphosphate), a reaction catalyzed by the N-terminal domain. The polypeptide is Bifunctional protein GlmU (Bordetella bronchiseptica (strain ATCC BAA-588 / NCTC 13252 / RB50) (Alcaligenes bronchisepticus)).